The chain runs to 280 residues: Fasciclin-like arabinogalactan protein 3 (280 aa).

The signal sequence occupies residues 1 to 24 (MGLKVSSSLLCLTILLAVSSIVSA). One can recognise an FAS1 domain in the interval 25–169 (VNITRVLEKY…LSVVQISMPI (145 aa)). Residues Asn-26, Asn-126, and Asn-159 are each glycosylated (N-linked (GlcNAc...) asparagine). The segment covering 180 to 193 (VPPPPPMSSPPAPS) has biased composition (pro residues). Positions 180–262 (VPPPPPMSSP…EPPSSASNTG (83 aa)) are disordered. Over residues 219–234 (APETAPASAPSESDSP) the composition is skewed to low complexity. A lipid anchor (GPI-anchor amidated serine) is attached at Ser-256. Residues 257 to 280 (SASNTGLSFGAVLVLGFVASFVGF) constitute a propeptide, removed in mature form.

It belongs to the fasciclin-like AGP family.

Its subcellular location is the cell membrane. Functionally, may be a cell surface adhesion protein. The sequence is that of Fasciclin-like arabinogalactan protein 3 (FLA3) from Arabidopsis thaliana (Mouse-ear cress).